The sequence spans 314 residues: Versiconal hemiacetal acetate esterase (314 aa).

The short motif at histidine 85–glycine 87 is the Involved in the stabilization of the negatively charged intermediate by the formation of the oxyanion hole element. Residues serine 154, aspartate 255, and histidine 285 contribute to the active site.

This sequence belongs to the 'GDXG' lipolytic enzyme family.

The enzyme catalyses (2S,3S)-versiconal hemiacetal acetate + H2O = (2S-3S)-versiconal hemiacetal + acetate + H(+). It catalyses the reaction (3S)-versiconol acetate + H2O = (S)-versiconol + acetate + H(+). It participates in mycotoxin biosynthesis; aflatoxin biosynthesis. Its function is as follows. Versiconal hemiacetal acetate esterase; part of the gene cluster that mediates the biosynthesis of aflatoxins, a group of polyketide-derived furanocoumarins, and part of the most toxic and carcinogenic compounds among the known mycotoxins. The four major aflatoxins produced by A.parasiticus are aflatoxin B1 (AFB1), aflatoxin B2 (AFB2), aflatoxin G1 (AFG1) and aflatoxin G2 (AFG2). Within the aflatoxin pathway, the versiconal hemiacetal acetate esterase aflJ converts versiconal hemiacetal acetate (VHA) into versiconal (VAL). The biosynthesis of aflatoxins begins with the norsolorinic acid synthase aflC that combines a hexanoyl starter unit produced by the fatty acid synthase aflA/aflB and 7 malonyl-CoA extender units to synthesize the precursor NOR. The second step is the conversion of NOR to averantin and requires the norsolorinic acid ketoreductase aflD, which catalyzes the dehydration of norsolorinic acid to form (1'S)-averantin. The norsolorinic acid reductases aflE and aflF may also play a role in the conversion of NOR to AVN. The cytochrome P450 monooxygenase aflG then catalyzes the hydroxylation of AVN to 5'hydroxyaverantin (HAVN). The next step is performed by the 5'-hydroxyaverantin dehydrogenase aflH that transforms HAVN to 5'-oxoaverantin (OAVN) which is further converted to averufin (AVF) by aflK that plays a dual role in the pathway, as a 5'-oxoaverantin cyclase that mediates conversion of 5'-oxoaverantin, as well as a versicolorin B synthase in a later step in the pathway. The averufin oxidase aflI catalyzes the conversion of AVF to versiconal hemiacetal acetate (VHA). VHA is then the substrate for the versiconal hemiacetal acetate esterase aflJ to yield versiconal (VAL). Versicolorin B synthase aflK then converts VAL to versicolorin B (VERB) by closing the bisfuran ring of aflatoxin which is required for DNA-binding, thus giving to aflatoxin its activity as a mutagen. Then, the activity of the versicolorin B desaturase aflL leads to versicolorin A (VERA). A branch point starts from VERB since it can also be converted to dihydrodemethylsterigmatocystin (DMDHST), probably also by aflL, VERA being a precursor for aflatoxins B1 and G1, and DMDHST for aflatoxins B2 and G2. Next, the versicolorin reductase aflM and the cytochrome P450 monooxygenase aflN are involved in conversion of VERA to demethylsterigmatocystin (DMST). AflX and aflY seem also involved in this step, through probable aflX-mediated epoxide ring-opening step following versicolorin A oxidation and aflY-mediated Baeyer-Villiger oxidation required for the formation of the xanthone ring. The methyltransferase aflO then leads to the modification of DMST to sterigmatocystin (ST), and of DMDHST to dihydrosterigmatocystin (DHST). Both ST and DHST are then substrates of the O-methyltransferase aflP to yield O-methylsterigmatocystin (OMST) and dihydro-O-methylsterigmatocystin (DHOMST), respectively. Finally OMST is converted to aflatoxins B1 and G1, and DHOMST to aflatoxins B2 and G2, via the action of several enzymes including O-methylsterigmatocystin oxidoreductase aflQ, the cytochrome P450 monooxygenase aflU, but also the NADH-dependent flavin oxidoreductase nadA which is specifically required for the synthesis of AFG1. The protein is Versiconal hemiacetal acetate esterase of Aspergillus parasiticus (strain ATCC 56775 / NRRL 5862 / SRRC 143 / SU-1).